A 309-amino-acid polypeptide reads, in one-letter code: Probable manganese-dependent inorganic pyrophosphatase (309 aa).

Residues His9, Asp13, Asp15, Asp75, His97, and Asp149 each coordinate Mn(2+).

This sequence belongs to the PPase class C family. The cofactor is Mn(2+).

It localises to the cytoplasm. It carries out the reaction diphosphate + H2O = 2 phosphate + H(+). This chain is Probable manganese-dependent inorganic pyrophosphatase, found in Bacillus cereus (strain G9842).